A 129-amino-acid polypeptide reads, in one-letter code: Fluoride-specific ion channel FluC (129 aa).

3 helical membrane-spanning segments follow: residues 20–40 (WFLG…TLAA), 67–87 (LLII…TAEI), and 96–116 (IMTA…MMLL). Residues glycine 75 and threonine 78 each contribute to the Na(+) site.

Belongs to the fluoride channel Fluc/FEX (TC 1.A.43) family.

It is found in the cell inner membrane. It catalyses the reaction fluoride(in) = fluoride(out). Its activity is regulated as follows. Na(+) is not transported, but it plays an essential structural role and its presence is essential for fluoride channel function. Its function is as follows. Fluoride-specific ion channel. Important for reducing fluoride concentration in the cell, thus reducing its toxicity. The protein is Fluoride-specific ion channel FluC of Desulfovibrio desulfuricans (strain ATCC 27774 / DSM 6949 / MB).